The primary structure comprises 408 residues: Histone acetyltransferase type B subunit 2 (408 aa).

5 WD repeats span residues 120–160 (KHEQ…KDHG), 167–207 (YHKE…NKSP), 213–253 (VHTD…AIQK), 255–295 (SVSS…KPLH), and 299–339 (GHED…AEQQ). An interaction with the histone H4 N-terminus region spans residues 341–345 (DDAYD). Residues 356 to 396 (GHRSPVNEFSHNSNVPWLMCSVEEENVLQIWKPANKIVRPP) form a WD 6 repeat.

This sequence belongs to the WD repeat RBAP46/RBAP48/MSI1 family. In terms of assembly, component of the HAT-B complex composed of at least HAT1 and HAT2. The HAT-B complex binds to histone H4 tail.

Its subcellular location is the cytoplasm. The protein localises to the nucleus. Its function is as follows. Regulatory subunit of the histone acetylase B (HAT-B) complex. The complex acetylates 'Lys-12' of histone H4 which is required for telomeric silencing. The chain is Histone acetyltransferase type B subunit 2 (HAT2) from Kluyveromyces lactis (strain ATCC 8585 / CBS 2359 / DSM 70799 / NBRC 1267 / NRRL Y-1140 / WM37) (Yeast).